A 580-amino-acid polypeptide reads, in one-letter code: Mucolipin-1 (580 aa).

Positions methionine 1–glutamate 38 are disordered. Residues methionine 1 to lysine 65 lie on the Cytoplasmic side of the membrane. The residue at position 10 (serine 10) is a Phosphoserine. The Dileucine motif; mediates targeting to lysosomes signature appears at glutamate 11–leucine 16. Positions arginine 42–lysine 62 are interaction with phosphoinositides. Residues leucine 66–serine 86 form a helical membrane-spanning segment. Residues asparagine 87–arginine 298 lie on the Extracellular side of the membrane. An extracellular/lumenal pore loop region spans residues leucine 107 to threonine 121. Cysteines 166 and 192 form a disulfide. The N-linked (GlcNAc...) asparagine glycan is linked to asparagine 230. Cysteine 253 and cysteine 284 are joined by a disulfide. A helical membrane pass occupies residues leucine 299–leucine 321. Residues arginine 322–phenylalanine 350 are Cytoplasmic-facing. A helical transmembrane segment spans residues valine 351 to methionine 371. Residues lysine 372–serine 382 lie on the Extracellular side of the membrane. A helical membrane pass occupies residues tyrosine 383–leucine 405. At threonine 406–arginine 427 the chain is on the cytoplasmic side. A helical membrane pass occupies residues phenylalanine 428–glycine 448. The Extracellular portion of the chain corresponds to proline 449–serine 456. Residues leucine 457–phenylalanine 477 constitute an intramembrane region (pore-forming). Residues asparagine 469–phenylalanine 474 carry the Selectivity filter motif. The Extracellular segment spans residues alanine 478 to tryptophan 491. The helical transmembrane segment at leucine 492–phenylalanine 513 threads the bilayer. Over isoleucine 514–asparagine 580 the chain is Cytoplasmic. A phosphoserine; by PAK mark is found at serine 557 and serine 559. The required for palmitoylation and association with membranes stretch occupies residues cysteine 565–cysteine 567. The short motif at glutamate 573–leucine 578 is the Dileucine internalization motif; mediates AP2 complex-dependent internalization element.

It belongs to the transient receptor (TC 1.A.4) family. Polycystin subfamily. MCOLN1 sub-subfamily. Homotetramer. Homooligomer. Can heterooligomerize with MCOLN2 or MCOLN3; heteromeric assemblies have different channel properties as compared to the respective homooligomers and may be tissue-specific. Interacts with PDCD6. Interacts with TMEM163. Interacts with LAPTM4B. Palmitoylated; involved in association with membranes. In terms of processing, phosphorylation by PKA inhibits channel activity. Dephosphorylation increases activity. Post-translationally, proteolytically cleaved probably involving multiple lysosomal proteases including cathepsin B; inhibits lysosomal channel activity.

The protein localises to the late endosome membrane. The protein resides in the lysosome membrane. Its subcellular location is the cytoplasmic vesicle membrane. It localises to the cell projection. It is found in the phagocytic cup. The protein localises to the cytoplasmic vesicle. The protein resides in the phagosome membrane. Its subcellular location is the cell membrane. It catalyses the reaction Ca(2+)(in) = Ca(2+)(out). It carries out the reaction Fe(2+)(in) = Fe(2+)(out). The catalysed reaction is Mg(2+)(in) = Mg(2+)(out). The enzyme catalyses K(+)(in) = K(+)(out). It catalyses the reaction Na(+)(in) = Na(+)(out). With respect to regulation, channel activity is controlled by multiple regulatory mechanisms in different subcellular compartments. Channel function is transiently modulated by changes in Ca(2+) in a pH-dependent manner; pH changes modify the aggregation state of unitary channels; a negative cooperativity between extracellular/lumenal Ca(2+) and H(+) is suggested. Regulated by phosphoinositides in a compartment-specific manner: in lysosomes activated by PtdIns(3,5)P2 (Phosphatidylinositol 3,5-bisphosphate) and at the plasma membrane inhibited by PtdIns(4,5)P2 (Phosphatidylinositol 4,5-bisphosphate). In terms of biological role, nonselective cation channel probably playing a role in the regulation of membrane trafficking events and of metal homeostasis. Acts as a Ca(2+)-permeable cation channel with inwardly rectifying activity. Proposed to play a major role in Ca(2+) release from late endosome and lysosome vesicles to the cytoplasm, which is important for many lysosome-dependent cellular events, including the fusion and trafficking of these organelles, exocytosis and autophagy. Required for efficient uptake of large particles in macrophages in which Ca(2+) release from the lysosomes triggers lysosomal exocytosis. May also play a role in phagosome-lysosome fusion. Involved in lactosylceramide trafficking indicative for a role in the regulation of late endocytic membrane fusion/fission events. By mediating lysosomal Ca(2+) release is involved in regulation of mTORC1 signaling and in mTOR/TFEB-dependent lysosomal adaptation to environmental cues such as nutrient levels. Seems to act as lysosomal active oxygen species (ROS) sensor involved in ROS-induced TFEB activation and autophagy. Also functions as a Fe(2+) permeable channel in late endosomes and lysosomes. Also permeable to Mg(2+), Na(+). K(+) and Cs(+). Proposed to play a role in zinc homeostasis probably implicating its association with TMEM163. In adaptive immunity, TRPML2 and TRPML1 may play redundant roles in the function of the specialized lysosomes of B cells. May contribute to cellular lipase activity within the late endosomal pathway or at the cell surface which may be involved in processes of membrane reshaping and vesiculation, especially the growth of tubular structures. However, it is not known, whether it conveys the enzymatic activity directly, or merely facilitates the activity of an associated phospholipase. This Macaca fascicularis (Crab-eating macaque) protein is Mucolipin-1 (MCOLN1).